A 276-amino-acid polypeptide reads, in one-letter code: Adenylate kinase (276 aa).

Residue 38–43 (GSGKGT) coordinates ATP. The NMP stretch occupies residues 58 to 87 (STGDMLRAAIEQGTETGKQAKTIMDQGGLV). Residues T59, R64, 85 to 87 (GLV), 113 to 116 (GFPR), and Q120 each bind AMP. The interval 154 to 191 (GRLVHPSSGRSYHREFFPPKVDMIDDITGEPLIQRSDD) is LID. ATP is bound by residues R155 and 164 to 165 (SY). Residues R188 and R199 each coordinate AMP. K227 provides a ligand contact to ATP.

This sequence belongs to the adenylate kinase family. AK2 subfamily. As to quaternary structure, monomer.

The protein localises to the cytoplasm. The protein resides in the cytosol. It is found in the mitochondrion intermembrane space. The enzyme catalyses AMP + ATP = 2 ADP. In terms of biological role, catalyzes the reversible transfer of the terminal phosphate group between ATP and AMP. Plays an important role in cellular energy homeostasis and in adenine nucleotide metabolism. Adenylate kinase activity is critical for regulation of the phosphate utilization and the AMP de novo biosynthesis pathways. In Dictyostelium discoideum (Social amoeba), this protein is Adenylate kinase (adkA).